Here is a 241-residue protein sequence, read N- to C-terminus: Ribosomal RNA small subunit methyltransferase G (241 aa).

Residues Gly-96, Phe-101, Glu-119–Ser-121, Val-147–Glu-148, and Arg-166 contribute to the S-adenosyl-L-methionine site.

It belongs to the methyltransferase superfamily. RNA methyltransferase RsmG family.

Its subcellular location is the cytoplasm. It catalyses the reaction guanosine(527) in 16S rRNA + S-adenosyl-L-methionine = N(7)-methylguanosine(527) in 16S rRNA + S-adenosyl-L-homocysteine. Functionally, specifically methylates the N7 position of guanine in position 527 of 16S rRNA. The polypeptide is Ribosomal RNA small subunit methyltransferase G (Syntrophus aciditrophicus (strain SB)).